The sequence spans 331 residues: Ketol-acid reductoisomerase (NADP(+)) (331 aa).

Residues 2–181 enclose the KARI N-terminal Rossmann domain; the sequence is TKVYYEDAVK…GATRAGVIET (180 aa). Residues 25-28, Arg-48, Ser-52, and 82-85 each bind NADP(+); these read YGSQ and DETQ. His-107 is a catalytic residue. Gly-133 contributes to the NADP(+) binding site. One can recognise a KARI C-terminal knotted domain in the interval 182–327; the sequence is TFKEETETDL…AELREMMPFV (146 aa). Asp-190, Glu-194, Glu-226, and Glu-230 together coordinate Mg(2+). Ser-251 serves as a coordination point for substrate.

Belongs to the ketol-acid reductoisomerase family. It depends on Mg(2+) as a cofactor.

The enzyme catalyses (2R)-2,3-dihydroxy-3-methylbutanoate + NADP(+) = (2S)-2-acetolactate + NADPH + H(+). It carries out the reaction (2R,3R)-2,3-dihydroxy-3-methylpentanoate + NADP(+) = (S)-2-ethyl-2-hydroxy-3-oxobutanoate + NADPH + H(+). Its pathway is amino-acid biosynthesis; L-isoleucine biosynthesis; L-isoleucine from 2-oxobutanoate: step 2/4. It participates in amino-acid biosynthesis; L-valine biosynthesis; L-valine from pyruvate: step 2/4. Involved in the biosynthesis of branched-chain amino acids (BCAA). Catalyzes an alkyl-migration followed by a ketol-acid reduction of (S)-2-acetolactate (S2AL) to yield (R)-2,3-dihydroxy-isovalerate. In the isomerase reaction, S2AL is rearranged via a Mg-dependent methyl migration to produce 3-hydroxy-3-methyl-2-ketobutyrate (HMKB). In the reductase reaction, this 2-ketoacid undergoes a metal-dependent reduction by NADPH to yield (R)-2,3-dihydroxy-isovalerate. This is Ketol-acid reductoisomerase (NADP(+)) from Listeria monocytogenes serovar 1/2a (strain ATCC BAA-679 / EGD-e).